Reading from the N-terminus, the 476-residue chain is MMERIRKEMILMERGLHSPTAGKRFSNLSNSAGNAVLEALENSQHPARLSPRLPSAPLHSALGELPAKGKFEIDTLFNLQHTGSESTVSSEISSAAESRKKPGHYSEAAAEADMSSDVEVGCSALRSPGGLGAAQLKENNGKGYAESGSAAGTTTSASGSGLGSLHGGSGGSGGSAALGGSGSGADQVRRYRTAFTREQIARLEKEFYRENYVSRPRRCELAAALNLPETTIKVWFQNRRMKDKRQRLAMSWPHPADPSFYTYMMTHAAATGSLPYPFHSHVPLHYYPHVGVTAAAAAAAASGAAAAASSPFATSIRPLDTFRALSHPYSRPELLCSFRHPGLYQAPAAAAGLNSAASAAAAAAAAAAAASSAAAAGAPPSGGSAPCSCLSCHSSQSAAAAAAAAAAALGSRGGGGGGGGGGGGGGGGAGAGGGSDFGCSAAAPRSESGFLPYSAAVLSKTAVSPPDQRDEAPLTR.

Disordered stretches follow at residues 82-113 (TGSE…AEAD) and 142-185 (KGYA…GSGA). Composition is skewed to low complexity over residues 84 to 96 (SEST…SSAA) and 147 to 159 (SGSA…SASG). Positions 160–183 (SGLGSLHGGSGGSGGSAALGGSGS) are enriched in gly residues. A DNA-binding region (homeobox) is located at residues 188-247 (VRRYRTAFTREQIARLEKEFYRENYVSRPRRCELAAALNLPETTIKVWFQNRRMKDKRQR).

It belongs to the even-skipped homeobox family.

Its subcellular location is the nucleus. The protein is Homeobox even-skipped homolog protein 2 (EVX2) of Homo sapiens (Human).